The sequence spans 1073 residues: Probable inorganic carbon transporter subunit DabA (1073 aa).

4 residues coordinate Zn(2+): Cys-551, Asp-553, His-742, and Cys-757.

This sequence belongs to the inorganic carbon transporter (TC 9.A.2) DabA family. Forms a complex with DabB. Zn(2+) serves as cofactor.

The protein localises to the cell inner membrane. In terms of biological role, part of an energy-coupled inorganic carbon pump. This Methylococcus capsulatus (strain ATCC 33009 / NCIMB 11132 / Bath) protein is Probable inorganic carbon transporter subunit DabA.